Here is a 472-residue protein sequence, read N- to C-terminus: Homeobox protein PKNOX2 (472 aa).

A disordered region spans residues 1–62; that stretch reads MMQHASPAPA…STPVPSAPID (62 aa). Over residues 26 to 38 the composition is skewed to polar residues; that stretch reads DSPQMTATTQPPS. Low complexity predominate over residues 46–56; sequence SAPSAAASTPV. Residues 96-179 enclose the MEIS N-terminal domain; sequence GSECITSASF…MHSDNLLRND (84 aa). Positions 291-350 form a DNA-binding region, homeobox; that stretch reads KRGVLPKHATNIMRSWLFQHLMHPYPTEDEKRQIAAQTNLTLLQVNNWFVNARRRILQPM. Disordered regions lie at residues 351-371, 386-405, and 423-472; these read LDAS…QHRP, QQQG…LDNL, and AAHD…DSLV. Over residues 361-371 the composition is skewed to basic residues; it reads KAKKIKSQHRP. A compositionally biased stretch (polar residues) spans 396–405; that stretch reads PDGSINLDNL. Acidic residues predominate over residues 429–454; sequence LDGTEEEDEDEMEEEEEEELEEEVDE.

It belongs to the TALE/MEIS homeobox family.

It localises to the nucleus. In Pongo abelii (Sumatran orangutan), this protein is Homeobox protein PKNOX2 (PKNOX2).